The primary structure comprises 143 residues: Hemoglobin subunit alpha (143 aa).

Ser2 carries the post-translational modification N-acetylserine. The Globin domain occupies 2–143 (SLSDTDKAVV…LALALSEKYR (142 aa)). Residue His60 coordinates O2. A heme b-binding site is contributed by His89.

This sequence belongs to the globin family. In terms of assembly, heterotetramer of two alpha chains and two beta chains. Red blood cells.

Its function is as follows. Involved in oxygen transport from gills to the various peripheral tissues. The protein is Hemoglobin subunit alpha (hbaa1) of Danio rerio (Zebrafish).